The primary structure comprises 512 residues: Maturase K (512 aa).

Belongs to the intron maturase 2 family. MatK subfamily.

It is found in the plastid. Its subcellular location is the chloroplast. Its function is as follows. Usually encoded in the trnK tRNA gene intron. Probably assists in splicing its own and other chloroplast group II introns. The sequence is that of Maturase K from Zantedeschia aethiopica (White calla lily).